A 118-amino-acid chain; its full sequence is Superoxide-generating NADPH oxidase light chain subunit (118 aa).

The next 4 membrane-spanning stretches (helical) occupy residues 9–29 (WAAM…IMGI), 36–56 (IAIY…PLSF), 62–82 (AIFH…VLCY), and 83–103 (FLVP…VFLI).

The protein belongs to the p22phox family. Composed of a heavy chain and a light chain.

It localises to the cell membrane. Critical component of the membrane-bound oxidase of phagocytes that generates superoxide. The sequence is that of Superoxide-generating NADPH oxidase light chain subunit (cybA) from Dictyostelium discoideum (Social amoeba).